Consider the following 469-residue polypeptide: Neuraminidase (469 aa).

Topologically, residues 1–6 are intravirion; the sequence is MNPNQK. The chain crosses the membrane as a helical span at residues 7 to 29; sequence IITIGSVSLTIATVCSLMQIAIL. The segment at 11-33 is involved in apical transport and lipid raft association; it reads GSVSLTIATVCSLMQIAILATTV. The Virion surface segment spans residues 30–469; that stretch reads ATTVTLHFKQ…DGANINFMPI (440 aa). The hypervariable stalk region stretch occupies residues 36 to 88; sequence HFKQHECDSPASNQVMPCEPIIIERNITEIVYLNNTTIEKEICPEVVEYRNWS. N-linked (GlcNAc...) asparagine; by host glycosylation is found at Asn-61, Asn-69, Asn-70, and Asn-86. The head of neuraminidase stretch occupies residues 91–469; sequence QCQITGFAPF…DGANINFMPI (379 aa). Intrachain disulfides connect Cys-92–Cys-417, Cys-124–Cys-129, Cys-183–Cys-230, Cys-232–Cys-237, Cys-278–Cys-291, Cys-280–Cys-289, Cys-318–Cys-337, and Cys-421–Cys-447. Position 118 (Arg-118) interacts with substrate. The N-linked (GlcNAc...) asparagine; by host glycan is linked to Asn-146. The Proton donor/acceptor role is filled by Asp-151. Arg-152 lines the substrate pocket. N-linked (GlcNAc...) asparagine; by host glycosylation is found at Asn-200 and Asn-234. Substrate is bound at residue 276–277; that stretch reads EE. Arg-292 serves as a coordination point for substrate. Residues Asp-293, Gly-297, and Asp-324 each coordinate Ca(2+). The segment at 325-349 is disordered; that stretch reads TPRNDDSSSNSNCRDPNNERGNPGV. Residue Arg-371 coordinates substrate. A glycan (N-linked (GlcNAc...) asparagine; by host) is linked at Asn-402. Tyr-406 (nucleophile) is an active-site residue.

It belongs to the glycosyl hydrolase 34 family. In terms of assembly, homotetramer. Ca(2+) is required as a cofactor. N-glycosylated.

It localises to the virion membrane. It is found in the host apical cell membrane. The catalysed reaction is Hydrolysis of alpha-(2-&gt;3)-, alpha-(2-&gt;6)-, alpha-(2-&gt;8)- glycosidic linkages of terminal sialic acid residues in oligosaccharides, glycoproteins, glycolipids, colominic acid and synthetic substrates.. Its activity is regulated as follows. Inhibited by the neuraminidase inhibitors zanamivir (Relenza) and oseltamivir (Tamiflu). These drugs interfere with the release of progeny virus from infected cells and are effective against all influenza strains. Resistance to neuraminidase inhibitors is quite rare. Functionally, catalyzes the removal of terminal sialic acid residues from viral and cellular glycoconjugates. Cleaves off the terminal sialic acids on the glycosylated HA during virus budding to facilitate virus release. Additionally helps virus spread through the circulation by further removing sialic acids from the cell surface. These cleavages prevent self-aggregation and ensure the efficient spread of the progeny virus from cell to cell. Otherwise, infection would be limited to one round of replication. Described as a receptor-destroying enzyme because it cleaves a terminal sialic acid from the cellular receptors. May facilitate viral invasion of the upper airways by cleaving the sialic acid moieties on the mucin of the airway epithelial cells. Likely to plays a role in the budding process through its association with lipid rafts during intracellular transport. May additionally display a raft-association independent effect on budding. Plays a role in the determination of host range restriction on replication and virulence. Sialidase activity in late endosome/lysosome traffic seems to enhance virus replication. This chain is Neuraminidase, found in Influenza A virus (strain A/Leningrad/134/17/1957 H2N2).